The following is a 74-amino-acid chain: Kappa-scoloptoxin(07)-Ssm2a (74 aa).

The signal sequence occupies residues 1–19 (MLVFYALLFVTVFSNTVMG). Residues 20 to 41 (ATIDKPIPKPILREAIEEIEVN) constitute a propeptide that is removed on maturation.

Belongs to the scoloptoxin-07 family. Post-translationally, contains 3 disulfide bonds. Expressed by the venom gland.

The protein localises to the secreted. Functionally, toxin that inhibits voltage-gated potassium channel currents in DRG neurons (IC(50)=about 570 nM). In vivo, induces neurotoxicity shown by twitching, paralysis, and body contraction. In vivo, insects injected with this toxin showed signs of neurotoxicity including twitching, paralysis, and body contraction. The protein is Kappa-scoloptoxin(07)-Ssm2a of Scolopendra mutilans (Chinese red-headed centipede).